A 689-amino-acid polypeptide reads, in one-letter code: Glycine--tRNA ligase beta subunit (689 aa).

Belongs to the class-II aminoacyl-tRNA synthetase family. As to quaternary structure, tetramer of two alpha and two beta subunits.

The protein localises to the cytoplasm. It carries out the reaction tRNA(Gly) + glycine + ATP = glycyl-tRNA(Gly) + AMP + diphosphate. The sequence is that of Glycine--tRNA ligase beta subunit from Shewanella woodyi (strain ATCC 51908 / MS32).